A 283-amino-acid chain; its full sequence is ATP phosphoribosyltransferase (283 aa).

Belongs to the ATP phosphoribosyltransferase family. Long subfamily. Requires Mg(2+) as cofactor.

It localises to the cytoplasm. The catalysed reaction is 1-(5-phospho-beta-D-ribosyl)-ATP + diphosphate = 5-phospho-alpha-D-ribose 1-diphosphate + ATP. Its pathway is amino-acid biosynthesis; L-histidine biosynthesis; L-histidine from 5-phospho-alpha-D-ribose 1-diphosphate: step 1/9. Feedback inhibited by histidine. In terms of biological role, catalyzes the condensation of ATP and 5-phosphoribose 1-diphosphate to form N'-(5'-phosphoribosyl)-ATP (PR-ATP). Has a crucial role in the pathway because the rate of histidine biosynthesis seems to be controlled primarily by regulation of HisG enzymatic activity. The polypeptide is ATP phosphoribosyltransferase (Bifidobacterium longum subsp. infantis (strain ATCC 15697 / DSM 20088 / JCM 1222 / NCTC 11817 / S12)).